Here is a 1400-residue protein sequence, read N- to C-terminus: S phase cyclin A-associated protein in the endoplasmic reticulum (1400 aa).

Disordered regions lie at residues 36-61 (ESKD…GTHK), 226-277 (VKAH…IRSR), 517-550 (PARP…HEEK), and 701-723 (RIEQ…RARD). Polar residues predominate over residues 231–243 (TGSTASSEITPAQ). The segment covering 539-550 (TIAESKKKHEEK) has biased composition (basic and acidic residues). The C2H2-type zinc finger occupies 792 to 816 (KQCSLCNVLISSEVYLFSHVKGRKH). Phosphoserine is present on Ser832.

In terms of assembly, interacts with CCNA2/CDK2 complex, but not with CCNA2/CDC2, CCNB1/CDC2 or CCNE1/CDK2 complexes, at multiple phases of the cell cycle, including S and G2/M. Post-translationally, phosphorylated in vitro by the CCNA2/CDK2 complex. Widely expressed with high expression in testis. Isoform 1 is detected in various tissues, including retina, fetal and adult brain. Isoform 2 is expressed in the retina at high levels, and in the brain at very low levels.

It is found in the endoplasmic reticulum. The protein resides in the nucleus. CCNA2/CDK2 regulatory protein that transiently maintains CCNA2 in the cytoplasm. This Homo sapiens (Human) protein is S phase cyclin A-associated protein in the endoplasmic reticulum.